Reading from the N-terminus, the 308-residue chain is Tetraacyldisaccharide 4'-kinase (308 aa).

63–70 contacts ATP; sequence SFGGNGKT.

It belongs to the LpxK family.

It carries out the reaction a lipid A disaccharide + ATP = a lipid IVA + ADP + H(+). Its pathway is glycolipid biosynthesis; lipid IV(A) biosynthesis; lipid IV(A) from (3R)-3-hydroxytetradecanoyl-[acyl-carrier-protein] and UDP-N-acetyl-alpha-D-glucosamine: step 6/6. In terms of biological role, transfers the gamma-phosphate of ATP to the 4'-position of a tetraacyldisaccharide 1-phosphate intermediate (termed DS-1-P) to form tetraacyldisaccharide 1,4'-bis-phosphate (lipid IVA). This Campylobacter jejuni subsp. doylei (strain ATCC BAA-1458 / RM4099 / 269.97) protein is Tetraacyldisaccharide 4'-kinase.